Here is a 583-residue protein sequence, read N- to C-terminus: Ferredoxin--nitrite reductase, chloroplastic (583 aa).

Residues 1–22 constitute a chloroplast transit peptide; that stretch reads MSSLSVRFLSPPLFSSTPAWPR. [4Fe-4S] cluster-binding residues include C461, C467, C502, and C506. C506 provides a ligand contact to siroheme.

The protein belongs to the nitrite and sulfite reductase 4Fe-4S domain family. As to quaternary structure, monomer. Siroheme is required as a cofactor. [4Fe-4S] cluster serves as cofactor.

The protein resides in the plastid. The protein localises to the chloroplast. The catalysed reaction is 6 oxidized [2Fe-2S]-[ferredoxin] + NH4(+) + 2 H2O = nitrite + 6 reduced [2Fe-2S]-[ferredoxin] + 8 H(+). Its pathway is nitrogen metabolism; nitrate reduction (assimilation). In Betula pendula (European white birch), this protein is Ferredoxin--nitrite reductase, chloroplastic (NIR1).